A 287-amino-acid chain; its full sequence is Fructose-1,6-bisphosphatase class 1 (287 aa).

The Mg(2+) site is built by E67, D86, L88, and D89. Substrate contacts are provided by residues 89–92 (DGSS), Y195, and K226. E232 lines the Mg(2+) pocket.

Belongs to the FBPase class 1 family. In terms of assembly, homotetramer. The cofactor is Mg(2+).

It is found in the cytoplasm. The catalysed reaction is beta-D-fructose 1,6-bisphosphate + H2O = beta-D-fructose 6-phosphate + phosphate. Its pathway is carbohydrate biosynthesis; gluconeogenesis. This chain is Fructose-1,6-bisphosphatase class 1, found in Campylobacter concisus (strain 13826).